A 260-amino-acid polypeptide reads, in one-letter code: Hydroxyacylglutathione hydrolase (260 aa).

Zn(2+)-binding residues include H66, H68, D70, H71, H125, D150, and H188.

The protein belongs to the metallo-beta-lactamase superfamily. Glyoxalase II family. As to quaternary structure, monomer. Zn(2+) serves as cofactor.

The catalysed reaction is an S-(2-hydroxyacyl)glutathione + H2O = a 2-hydroxy carboxylate + glutathione + H(+). It participates in secondary metabolite metabolism; methylglyoxal degradation; (R)-lactate from methylglyoxal: step 2/2. Its function is as follows. Thiolesterase that catalyzes the hydrolysis of S-D-lactoyl-glutathione to form glutathione and D-lactic acid. This chain is Hydroxyacylglutathione hydrolase, found in Prochlorococcus marinus (strain MIT 9303).